A 450-amino-acid chain; its full sequence is Tubulin alpha-6 chain (450 aa).

GTP is bound by residues Gln-11, Glu-71, Gly-144, Thr-145, Thr-179, Asn-206, and Asn-228. Glu-71 contacts Mg(2+). Glu-254 is a catalytic residue. At Thr-349 the chain carries Phosphothreonine. The tract at residues 430-450 (KDYEEVGAEGGDDEDDEGEEY) is disordered. Over residues 431-450 (DYEEVGAEGGDDEDDEGEEY) the composition is skewed to acidic residues.

It belongs to the tubulin family. In terms of assembly, dimer of alpha and beta chains. A typical microtubule is a hollow water-filled tube with an outer diameter of 25 nm and an inner diameter of 15 nM. Alpha-beta heterodimers associate head-to-tail to form protofilaments running lengthwise along the microtubule wall with the beta-tubulin subunit facing the microtubule plus end conferring a structural polarity. Microtubules usually have 13 protofilaments but different protofilament numbers can be found in some organisms and specialized cells. Interacts with TFCB. Requires Mg(2+) as cofactor. In terms of processing, undergoes a tyrosination/detyrosination cycle, the cyclic removal and re-addition of a C-terminal tyrosine residue by the enzymes tubulin tyrosine carboxypeptidase (TTCP) and tubulin tyrosine ligase (TTL), respectively. Post-translationally, acetylation of alpha chains at Lys-40 stabilizes microtubules and affects affinity and processivity of microtubule motors. This modification has a role in multiple cellular functions, ranging from cell motility, cell cycle progression or cell differentiation to intracellular trafficking and signaling.

Its subcellular location is the cytoplasm. The protein localises to the cytoskeleton. It carries out the reaction GTP + H2O = GDP + phosphate + H(+). In terms of biological role, tubulin is the major constituent of microtubules, a cylinder consisting of laterally associated linear protofilaments composed of alpha- and beta-tubulin heterodimers. Microtubules grow by the addition of GTP-tubulin dimers to the microtubule end, where a stabilizing cap forms. Below the cap, tubulin dimers are in GDP-bound state, owing to GTPase activity of alpha-tubulin. The chain is Tubulin alpha-6 chain (TUBA6) from Arabidopsis thaliana (Mouse-ear cress).